Consider the following 147-residue polypeptide: Acidic phospholipase A2 S9-53F (147 aa).

Residues 1–19 (MYPAHLLVLLAVCVSLLGA) form the signal peptide. Residues 20–27 (SDIPPQPL) constitute a propeptide that is removed on maturation. 7 disulfide bridges follow: Cys38-Cys99, Cys54-Cys146, Cys56-Cys72, Cys71-Cys127, Cys78-Cys120, Cys88-Cys113, and Cys106-Cys118. The Ca(2+) site is built by Tyr55, Gly57, and Gly59. Residue His75 is part of the active site. Asp76 is a binding site for Ca(2+). Asp121 is a catalytic residue.

Belongs to the phospholipase A2 family. Group I subfamily. D49 sub-subfamily. Ca(2+) is required as a cofactor. As to expression, expressed by the venom gland.

The protein localises to the secreted. The catalysed reaction is a 1,2-diacyl-sn-glycero-3-phosphocholine + H2O = a 1-acyl-sn-glycero-3-phosphocholine + a fatty acid + H(+). Its function is as follows. Snake venom phospholipase A2 (PLA2) that inhibits collagen-induced platelet aggregation. PLA2 catalyzes the calcium-dependent hydrolysis of the 2-acyl groups in 3-sn-phosphoglycerides. This Austrelaps superbus (Lowland copperhead snake) protein is Acidic phospholipase A2 S9-53F.